The sequence spans 843 residues: MSLISAVEDRDIHNIGKTSGGGSRTSSITSSKKSLKHGSKSLRKPKVYQTTGELLSREALYKAKLKYGVYQSPAQSYSIGVSDAHAASDKAANLAHDNQTTVEAYKRMFIDPNATKAASKMGPKVVRNNSITSATSKTSKESQTKRKSKESPGAAASKAYSMTMETTSLSSQTNSRSYSITSASSVLSGASGSFNSTVNPKPKTLNLEKVLVGAEKKAESRIKERWEPEKTNFQYGVKTDEHGNLNQFSFSNEMMNNIMAKVDAPKAQDLQKVKKVSAEKEAKSMKFALGAANAVKDMHPGEDIDKSIALKAQKRETYLSQLTSQQVLTLARANVDRQLDIIEKSDMHRKLFTNMEYNKAAVAVAQSNHQKKTEFHNKINMGGGLFLSPEDITKIASGLISPVLGEVSERAEAQRAMDEEIAERTEAYNKSLNEWETMERSIISNDAKVLTTTANRHQTEKKTSQEKIKASFDALVARMDTKVAERETLLEDTKSKEIEFKKQMQQELKDEKARLDQDLEEWGKKCEQDITEARKEQEELLKPYHDDLANAEAEHKTLVEERDAINAEISRLQDAIVDHKRKISGYGNDLDAQKNRNIREDDKLLELGQTKESLESHLNDDVIILANKAKEQAELSTKEARLKQLEVDSLINERKSELNATDIELKKEKLSLLEAMKDVASARGDDKIDEEKVKKLIGMTSEEYLTQNKSVEKNVEDLPTQLEKIEEGDELKKEEIVGAETKNSGGDGVPVSTAAKEATETSSAVQTKEPEEKISIGNKSSGKEDANDCKSAEHSKEISVSQKAGNNKSLGVSPDSLEHTFSGFSQGSSIEDDQDAISNQEKK.

Position 2 is an N-acetylserine (serine 2). A Phosphoserine modification is found at serine 2. The interval 13–44 (HNIGKTSGGGSRTSSITSSKKSLKHGSKSLRK) is disordered. The segment covering 33–44 (KSLKHGSKSLRK) has biased composition (basic residues). Phosphoserine occurs at positions 88 and 130. Positions 120–174 (KMGPKVVRNNSITSATSKTSKESQTKRKSKESPGAAASKAYSMTMETTSLSSQTN) are disordered. Composition is skewed to polar residues over residues 127 to 137 (RNNSITSATSK) and 163 to 174 (TMETTSLSSQTN). Phosphoserine is present on residues serine 182, serine 401, serine 584, and serine 710. Residues 717 to 843 (DLPTQLEKIE…QDAISNQEKK (127 aa)) are disordered. A Phosphothreonine modification is found at threonine 720. Over residues 752–764 (STAAKEATETSSA) the composition is skewed to low complexity. 2 positions are modified to phosphoserine: serine 763 and serine 775. Residues 781–797 (SGKEDANDCKSAEHSKE) are compositionally biased toward basic and acidic residues. The span at 798–810 (ISVSQKAGNNKSL) shows a compositional bias: polar residues. A phosphoserine mark is found at serine 816, serine 828, serine 829, and serine 838.

Belongs to the EIS1 family.

It localises to the cytoplasmic granule. It is found in the cell membrane. In terms of biological role, required for normal formation of eisosomes, large cytoplasmic protein assemblies that localize to specialized domains on plasma membrane and mark the site of endocytosis. The protein is Eisosome protein 1 (EIS1) of Saccharomyces cerevisiae (strain Lalvin EC1118 / Prise de mousse) (Baker's yeast).